Here is a 1357-residue protein sequence, read N- to C-terminus: Regulator of V-ATPase in vacuolar membrane protein 1 (1357 aa).

WD repeat units lie at residues 98 to 134, 142 to 182, 190 to 239, 384 to 423, 431 to 470, 595 to 636, 638 to 679, and 898 to 939; these read HDDT…GVYQ, KQPK…GEQA, PHPK…KNHT, GHNK…HGVS, QTES…KEDS, INTG…LEYE, TFHN…YTNN, and QKSI…RIAY. The segment at 1243–1357 is disordered; it reads GSPSASDIES…ITKNLLDDFV (115 aa). 2 positions are modified to phosphoserine: S1244 and S1248. The span at 1272-1288 shows a compositional bias: low complexity; sequence STSSNSLAQSSSSAPRS. Residues 1320 to 1332 are compositionally biased toward basic and acidic residues; the sequence is SENRKDKLSKDIL.

In terms of assembly, component of the RAVE complex composed of RAV1, RAV2 and CBF3D/SKP1. Within the complex, it interacts directly with RAV2 and CBF3D. Interacts with the V-ATPase V1 subunits VMA1, VMA2 and VMA8.

The protein localises to the endomembrane system. Component of the RAVE complex, which is required for stable assembly of the vacuolar ATPase complex V-ATPase under many conditions. Required for transport between the early endosome and the late endosome/prevacuolar compartment (PVC), suggesting that assembly of vacuolar ATPase at the early endosome is required for transport from the early endosome to the PVC. In Saccharomyces cerevisiae (strain ATCC 204508 / S288c) (Baker's yeast), this protein is Regulator of V-ATPase in vacuolar membrane protein 1 (RAV1).